We begin with the raw amino-acid sequence, 445 residues long: Chromosome partition protein MukF (445 aa).

A leucine-zipper region spans residues 213 to 241 (LSETSATLRELQDTLQAAGDELQTQILDI).

Belongs to the MukF family. In terms of assembly, interacts, and probably forms a ternary complex, with MukE and MukB via its C-terminal region. The complex formation is stimulated by calcium or magnesium. It is required for an interaction between MukE and MukB.

It localises to the cytoplasm. Its subcellular location is the nucleoid. Its function is as follows. Involved in chromosome condensation, segregation and cell cycle progression. May participate in facilitating chromosome segregation by condensation DNA from both sides of a centrally located replisome during cell division. Not required for mini-F plasmid partitioning. Probably acts via its interaction with MukB and MukE. Overexpression results in anucleate cells. It has a calcium binding activity. The chain is Chromosome partition protein MukF from Vibrio cholerae serotype O1 (strain ATCC 39315 / El Tor Inaba N16961).